The chain runs to 572 residues: Proline--tRNA ligase (572 aa).

This sequence belongs to the class-II aminoacyl-tRNA synthetase family. ProS type 1 subfamily. As to quaternary structure, homodimer.

Its subcellular location is the cytoplasm. The catalysed reaction is tRNA(Pro) + L-proline + ATP = L-prolyl-tRNA(Pro) + AMP + diphosphate. Catalyzes the attachment of proline to tRNA(Pro) in a two-step reaction: proline is first activated by ATP to form Pro-AMP and then transferred to the acceptor end of tRNA(Pro). As ProRS can inadvertently accommodate and process non-cognate amino acids such as alanine and cysteine, to avoid such errors it has two additional distinct editing activities against alanine. One activity is designated as 'pretransfer' editing and involves the tRNA(Pro)-independent hydrolysis of activated Ala-AMP. The other activity is designated 'posttransfer' editing and involves deacylation of mischarged Ala-tRNA(Pro). The misacylated Cys-tRNA(Pro) is not edited by ProRS. This Alteromonas mediterranea (strain DSM 17117 / CIP 110805 / LMG 28347 / Deep ecotype) protein is Proline--tRNA ligase.